The sequence spans 503 residues: 26S proteasome non-ATPase regulatory subunit 5 (503 aa).

An N-acetylalanine modification is found at A2.

It belongs to the proteasome subunit S5B/HSM3 family. In terms of assembly, interacts with PSMC1, PSMC2, PSMD1 and PSMD6. Part of transient complex containing PSMD5, PSMC2, PSMC1 and PSMD2 formed during the assembly of the 26S proteasome.

Functionally, acts as a chaperone during the assembly of the 26S proteasome, specifically of the base subcomplex of the PA700/19S regulatory complex (RC). In the initial step of the base subcomplex assembly is part of an intermediate PSMD5:PSMC2:PSMC1:PSMD2 module which probably assembles with a PSMD10:PSMC4:PSMC5:PAAF1 module followed by dissociation of PSMD5. The protein is 26S proteasome non-ATPase regulatory subunit 5 (PSMD5) of Bos taurus (Bovine).